Consider the following 338-residue polypeptide: Phenylalanine--tRNA ligase alpha subunit (338 aa).

A disordered region spans residues 71-101 (QFEEKRSSLSQQTSSSDTYQSLPDLTLPGRQ). A compositionally biased stretch (low complexity) spans 78-92 (SLSQQTSSSDTYQSL). E253 lines the Mg(2+) pocket.

It belongs to the class-II aminoacyl-tRNA synthetase family. Phe-tRNA synthetase alpha subunit type 1 subfamily. In terms of assembly, tetramer of two alpha and two beta subunits. Mg(2+) serves as cofactor.

The protein resides in the cytoplasm. The catalysed reaction is tRNA(Phe) + L-phenylalanine + ATP = L-phenylalanyl-tRNA(Phe) + AMP + diphosphate + H(+). The polypeptide is Phenylalanine--tRNA ligase alpha subunit (Desulfotalea psychrophila (strain LSv54 / DSM 12343)).